The following is a 151-amino-acid chain: Large ribosomal subunit protein bL9 (151 aa).

This sequence belongs to the bacterial ribosomal protein bL9 family.

Binds to the 23S rRNA. The sequence is that of Large ribosomal subunit protein bL9 from Nitrosospira multiformis (strain ATCC 25196 / NCIMB 11849 / C 71).